The sequence spans 812 residues: Mitochondrial intermediate peptidase (812 aa).

Residues 1-29 (MRLSRQLLRSTPFLTRAKPVSGKVSHFRS) constitute a mitochondrion transit peptide. The interval 19–49 (PVSGKVSHFRSRTDLKGGSSNSSKSPDSVGD) is disordered. Residues 37–46 (SSNSSKSPDS) are compositionally biased toward low complexity. His595 provides a ligand contact to Zn(2+). Glu596 is a catalytic residue. Zn(2+) is bound by residues His599 and His602.

Belongs to the peptidase M3 family. Zn(2+) is required as a cofactor.

The protein resides in the mitochondrion matrix. It carries out the reaction Release of an N-terminal octapeptide as second stage of processing of some proteins imported into the mitochondrion.. Cleaves proteins, imported into the mitochondrion, to their mature size. While most mitochondrial precursor proteins are processed to the mature form in one step by mitochondrial processing peptidase (MPP), the sequential cleavage by MIP of an octapeptide after initial processing by MPP is a required step for a subgroup of nuclear-encoded precursor proteins destined for the matrix or the inner membrane. In Scheffersomyces stipitis (strain ATCC 58785 / CBS 6054 / NBRC 10063 / NRRL Y-11545) (Yeast), this protein is Mitochondrial intermediate peptidase (OCT1).